Reading from the N-terminus, the 706-residue chain is MLTPIIRKFQYGQHTVTIETGMMARQATAAVMVSMDDTAVFVTVVGQKKAKPGQSFFPLTVNYQERTYAAGRIPGSFFRREGRPSEGETLTSRLIDRPIRPLFPDSFLNEVQVIATVVSVNPQINPDIVALIGASAALSLSGIPFNGPIGAARVGFINDQYVLNPTTDELKESRLDLVVAGTAGAVLMVESEADILSEDQMLGAVVFGHEQQQVVIENINALVAEAGKPKWDWHAEPVNEALHARVAELAAARLGDAYRITEKQERYTQVDAIKADVTEALLAQDDTLDAAEIQDILGSVEKDVVRSRVLRGEPRIDGREKDMIRGLDVRTGVLPRTHGSALFTRGETQALVTATLGTARDAQNIDELMGERTDSFLLHYNFPPYSVGETGMVGSPKRREIGHGRLAKRGVLAVMPSPSEFPYTVRVVSEITESNGSSSMASVCGASLALMDAGVPIKAAVAGIAMGLVKEDENFVVLSDILGDEDHLGDMDFKVAGSRDGITALQMDIKIEGITREIMQVALNQAKGARLHILGVMEQAISTPRGDISEFAPRIYTMKINPEKIKDVIGKGGSVIRALTDETGTTIEIEDDGTIKIAATDGDKAKHAIRRIEEITAEIEVNRIYAGKVTRIVDFGAFVAIGGGKEGLVHISQIADKRVDKVTDYLQMGQEVPVKVIEVDRQGRIRLSMKEATTPDAEAPAPEAAE.

Residues Asp486 and Asp492 each contribute to the Mg(2+) site. The region spanning 553–612 is the KH domain; that stretch reads PRIYTMKINPEKIKDVIGKGGSVIRALTDETGTTIEIEDDGTIKIAATDGDKAKHAIRRI. The region spanning 622–690 is the S1 motif domain; the sequence is NRIYAGKVTR…RQGRIRLSMK (69 aa).

It belongs to the polyribonucleotide nucleotidyltransferase family. In terms of assembly, component of the RNA degradosome, which is a multiprotein complex involved in RNA processing and mRNA degradation. It depends on Mg(2+) as a cofactor.

The protein resides in the cytoplasm. It catalyses the reaction RNA(n+1) + phosphate = RNA(n) + a ribonucleoside 5'-diphosphate. Functionally, involved in mRNA degradation. Catalyzes the phosphorolysis of single-stranded polyribonucleotides processively in the 3'- to 5'-direction. This chain is Polyribonucleotide nucleotidyltransferase, found in Yersinia enterocolitica serotype O:8 / biotype 1B (strain NCTC 13174 / 8081).